A 453-amino-acid polypeptide reads, in one-letter code: Acyl-coenzyme A thioesterase 2, mitochondrial (453 aa).

The N-terminal 42 residues, 1-42 (MVASSFAVLRASRLCQQDWKSWARLFVPPPLSTGGRTTWART), are a transit peptide targeting the mitochondrion. Residue K83 is modified to N6-acetyllysine. Catalysis depends on charge relay system residues S273, D365, and H399. An N6-succinyllysine modification is found at K447.

This sequence belongs to the C/M/P thioester hydrolase family. As to quaternary structure, monomer. In terms of tissue distribution, highly expressed in brown and white adipose tissue, muscle, heart, kidney, lung, adrenal gland and spleen; weakly expressed in intestine, testis and brain.

It is found in the mitochondrion matrix. The catalysed reaction is hexadecanoyl-CoA + H2O = hexadecanoate + CoA + H(+). The enzyme catalyses tetradecanoyl-CoA + H2O = tetradecanoate + CoA + H(+). It carries out the reaction octadecanoyl-CoA + H2O = octadecanoate + CoA + H(+). It catalyses the reaction eicosanoyl-CoA + H2O = eicosanoate + CoA + H(+). The catalysed reaction is decanoyl-CoA + H2O = decanoate + CoA + H(+). The enzyme catalyses dodecanoyl-CoA + H2O = dodecanoate + CoA + H(+). It carries out the reaction (9Z)-octadecenoyl-CoA + H2O = (9Z)-octadecenoate + CoA + H(+). It catalyses the reaction (9Z)-hexadecenoyl-CoA + H2O = (9Z)-hexadecenoate + CoA + H(+). The catalysed reaction is (9E)-octadecenoyl-CoA + H2O = (9E)-octadecenoate + CoA + H(+). The enzyme catalyses (9Z,12Z)-octadecadienoyl-CoA + H2O = (9Z,12Z)-octadecadienoate + CoA + H(+). It participates in lipid metabolism; fatty acid metabolism. Functionally, catalyzes the hydrolysis of acyl-CoAs into free fatty acids and coenzyme A (CoASH), regulating their respective intracellular levels. Displays higher activity toward long chain acyl CoAs (C14-C20). The enzyme is involved in enhancing the hepatic fatty acid oxidation in mitochondria. The sequence is that of Acyl-coenzyme A thioesterase 2, mitochondrial (Acot2) from Mus musculus (Mouse).